The primary structure comprises 235 residues: Exosome complex component RRP46 (235 aa).

Residues 1–13 (MEEETHTDAKIRA) show a composition bias toward basic and acidic residues. A disordered region spans residues 1 to 24 (MEEETHTDAKIRAENGTGSSPRGP). S20 is subject to Phosphoserine.

This sequence belongs to the RNase PH family. In terms of assembly, homodimer. Component of the RNA exosome core complex (Exo-9), composed of EXOSC1, EXOSC2, EXOSC3, EXOSC4, EXOSC5, EXOSC6, EXOSC7, EXOSC8 and EXOSC9; within the complex interacts with EXOSC3, EXOSC8, and EXOSC9. The catalytically inactive RNA exosome core complex (Exo-9) associates with the catalytic subunit EXOSC10/RRP6. Exo-9 may associate with DIS3 to form the nucleolar exosome complex, or DIS3L to form the cytoplasmic exosome complex. Exo-9 is formed by a hexameric base ring consisting of the heterodimers EXOSC4-EXOSC9, EXOSC5-EXOSC8 and EXOSC6-EXOSC7, and a cap ring consisting of EXOSC1, EXOSC2 and EXOSC3. The RNA exosome complex associates with cofactors C1D/RRP47, MPHOSPH6/MPP6 and MTREX/MTR4. Interacts with GTPBP1. Interacts with ZC3HAV1. Interacts with DDX17 only in the presence of ZC3HAV1 in an RNA-independent manner. As to expression, highly expressed in a variety of hematopoietic and epithelial tumor cell lines, but not in normal hematopoietic tissues or other normal tissue, with the exception of testis.

It localises to the nucleus. Its subcellular location is the nucleolus. The protein resides in the cytoplasm. Functionally, non-catalytic component of the RNA exosome complex which has 3'-&gt;5' exoribonuclease activity and participates in a multitude of cellular RNA processing and degradation events. In the nucleus, the RNA exosome complex is involved in proper maturation of stable RNA species such as rRNA, snRNA and snoRNA, in the elimination of RNA processing by-products and non-coding 'pervasive' transcripts, such as antisense RNA species and promoter-upstream transcripts (PROMPTs), and of mRNAs with processing defects, thereby limiting or excluding their export to the cytoplasm. The RNA exosome may be involved in Ig class switch recombination (CSR) and/or Ig variable region somatic hypermutation (SHM) by targeting AICDA deamination activity to transcribed dsDNA substrates. In the cytoplasm, the RNA exosome complex is involved in general mRNA turnover and specifically degrades inherently unstable mRNAs containing AU-rich elements (AREs) within their 3' untranslated regions, and in RNA surveillance pathways, preventing translation of aberrant mRNAs. It seems to be involved in degradation of histone mRNA. The catalytic inactive RNA exosome core complex of 9 subunits (Exo-9) is proposed to play a pivotal role in the binding and presentation of RNA for ribonucleolysis, and to serve as a scaffold for the association with catalytic subunits and accessory proteins or complexes. In vitro, EXOSC5 does not bind or digest single-stranded RNA and binds to double-stranded DNA without detectable DNase activity. The chain is Exosome complex component RRP46 (EXOSC5) from Homo sapiens (Human).